A 320-amino-acid polypeptide reads, in one-letter code: Thymidine kinase (320 aa).

10 to 17 (GAYDTGKS) contacts ATP. Residue Glu-33 is the Proton acceptor of the active site. Residues Tyr-51 and Gln-75 each contribute to the substrate site. Arg-162 is a binding site for ATP. Residue Arg-168 coordinates substrate.

This sequence belongs to the herpesviridae thymidine kinase family. Homodimer.

It catalyses the reaction thymidine + ATP = dTMP + ADP + H(+). Its function is as follows. Catalyzes the transfer of the gamma-phospho group of ATP to thymidine to generate dTMP in the salvage pathway of pyrimidine synthesis. The dTMP serves as a substrate for DNA polymerase during viral DNA replication. Allows the virus to be reactivated and to grow in non-proliferative cells lacking a high concentration of phosphorylated nucleic acid precursors. This chain is Thymidine kinase, found in Suid herpesvirus 1 (strain NIA-3) (SuHV-1).